A 152-amino-acid chain; its full sequence is SUZ RNA-binding domain-containing (152 aa).

Position 1 is an N-acetylmethionine (M1). Disordered stretches follow at residues T30–K86 and R99–R152. Phosphoserine occurs at positions 37, 39, and 51. The region spanning K42–S107 is the SUZ domain. Over residues P66–S79 the composition is skewed to polar residues. 2 positions are modified to phosphoserine: S105 and S107. The region spanning E111 to R152 is the SUZ-C domain. Residues E113 to R130 are compositionally biased toward basic and acidic residues.

The protein belongs to the SZRD1 family.

This is SUZ RNA-binding domain-containing (SZRD1) from Bos taurus (Bovine).